The primary structure comprises 412 residues: Double C2-like domain-containing protein beta (412 aa).

The segment at 1–36 (MTLRRRGEKATISIQEHMAIDVCPGPIRPIKQISDY) is negatively regulates targeting to plasma membrane. The tract at residues 1–90 (MTLRRRGEKA…EDVDQLFGAY (90 aa)) is mediates interaction with DYNLT1. The segment at 38–123 (PRFPRGLPPT…PDADGYESDD (86 aa)) is disordered. Residues 49–73 (APRASAPPDAPARSPAATAGPRSPS) show a composition bias toward low complexity. Over residues 95–108 (GPSPGPSPVRPPAK) the composition is skewed to pro residues. Over residues 112 to 123 (DEPDADGYESDD) the composition is skewed to acidic residues. 2 C2 domains span residues 126-250 (ALGT…SICL) and 266-399 (ERGR…ERWH). D157, D163, D218, D220, D297, D303, D357, D359, and D365 together coordinate Ca(2+). A mediates interaction with STXBP3 region spans residues 257–375 (DKAEDKSLEE…FIGGVVLGIN (119 aa)). Phosphoserine is present on S411.

As to quaternary structure, interacts with STX4; the interaction is calcium-dependent, increased by insulin and glucose, and mediates vesicle fusion with plasma membrane in pancreatic cells and adipocytes. Interacts with STXBP3; the interaction is direct, occurs at the cell membrane and regulates glucose-stimulated insulin secretion. Interacts with cytoplasmic dynein light chain DYNLT1. Interacts with the SNARE (soluble N-ethylmaleimide-sensitive factor attached protein receptor) complex composed of SNAP25, STX1A and VAMP2; the interaction is calcium-dependent and competitive with SYT1. May interact with UNC13A; the interaction mediates targeting to the plasma membrane. It depends on Ca(2+) as a cofactor. In terms of tissue distribution, expressed in brain; highly enriched in neurons.

It localises to the cytoplasm. The protein localises to the cytoplasmic granule. Its subcellular location is the cell membrane. Calcium sensor which positively regulates SNARE-dependent fusion of vesicles with membranes. Binds phospholipids in a calcium-dependent manner and may act at the priming stage of fusion by modifying membrane curvature to stimulate fusion. Involved in calcium-triggered exocytosis in chromaffin cells and calcium-dependent spontaneous release of neurotransmitter in absence of action potentials in neuronal cells. Involved both in glucose-stimulated insulin secretion in pancreatic cells and insulin-dependent GLUT4 transport to the plasma membrane in adipocytes. The polypeptide is Double C2-like domain-containing protein beta (Doc2b) (Rattus norvegicus (Rat)).